The following is a 404-amino-acid chain: uncharacterized protein (404 aa).

The first 21 residues, 1–21 (MRKLGLALSIMGLLLVSIVAG), serve as a signal peptide directing secretion. N-acetylcysteine is present on Cys22. A lipid anchor (S-archaeol cysteine) is attached at Cys22.

This sequence belongs to the BMP lipoprotein family.

It localises to the cell membrane. This is an uncharacterized protein from Pyrococcus abyssi (strain GE5 / Orsay).